The primary structure comprises 229 residues: Peptidase E (229 aa).

Catalysis depends on charge relay system residues Ser120, Asp135, and His157.

Belongs to the peptidase S51 family.

It localises to the cytoplasm. It catalyses the reaction Dipeptidase E catalyzes the hydrolysis of dipeptides Asp-|-Xaa. It does not act on peptides with N-terminal Glu, Asn or Gln, nor does it cleave isoaspartyl peptides.. Hydrolyzes dipeptides containing N-terminal aspartate residues. May play a role in allowing the cell to use peptide aspartate to spare carbon otherwise required for the synthesis of the aspartate family of amino acids. The chain is Peptidase E from Salmonella newport (strain SL254).